A 71-amino-acid polypeptide reads, in one-letter code: Large ribosomal subunit protein uL29 (71 aa).

The tract at residues glycine 32–lysine 51 is disordered.

This sequence belongs to the universal ribosomal protein uL29 family.

This is Large ribosomal subunit protein uL29 from Methanococcus maripaludis (strain DSM 14266 / JCM 13030 / NBRC 101832 / S2 / LL).